A 466-amino-acid chain; its full sequence is Argininosuccinate lyase (466 aa).

This sequence belongs to the lyase 1 family. Argininosuccinate lyase subfamily.

It is found in the cytoplasm. It catalyses the reaction 2-(N(omega)-L-arginino)succinate = fumarate + L-arginine. The protein operates within amino-acid biosynthesis; L-arginine biosynthesis; L-arginine from L-ornithine and carbamoyl phosphate: step 3/3. This chain is Argininosuccinate lyase, found in Synechococcus elongatus (strain ATCC 33912 / PCC 7942 / FACHB-805) (Anacystis nidulans R2).